Reading from the N-terminus, the 32-residue chain is MSDIN-like toxin proprotein 3 (32 aa).

A propeptide spanning residues 1-10 (MSDINATRLP) is cleaved from the precursor. A cross-link (cyclopeptide (Ser-Pro)) is located at residues 11-17 (SFFFPIP). A propeptide spanning residues 18 to 32 (CISDDIEMVLTRGER) is cleaved from the precursor.

Belongs to the MSDIN fungal toxin family. Post-translationally, processed by the macrocyclase-peptidase enzyme POPB to yield a toxic cyclic heptapeptide. POPB first removes 10 residues from the N-terminus. Conformational trapping of the remaining peptide forces the enzyme to release this intermediate rather than proceed to macrocyclization. The enzyme rebinds the remaining peptide in a different conformation and catalyzes macrocyclization of the N-terminal 8 residues.

Probable toxin that belongs to the MSDIN-like toxin family responsible for a large number of food poisoning cases and deaths. This chain is MSDIN-like toxin proprotein 3, found in Amanita phalloides (Death cap).